Here is a 255-residue protein sequence, read N- to C-terminus: Glycerol-3-phosphate regulon repressor (255 aa).

The region spanning 3–58 (QSLRHQKIIKLVEQSGYLSTEELVAALDVSPQTIRRDLNILAELDLIRRHHGGAAS) is the HTH deoR-type domain. Residues 20–39 (LSTEELVAALDVSPQTIRRD) constitute a DNA-binding region (H-T-H motif).

Functionally, repressor of the glycerol-3-phosphate regulon. This chain is Glycerol-3-phosphate regulon repressor (glpR), found in Haemophilus influenzae (strain ATCC 51907 / DSM 11121 / KW20 / Rd).